Consider the following 142-residue polypeptide: Ribosome-binding factor A (142 aa).

Residues Glu-119–Lys-142 are disordered.

It belongs to the RbfA family. As to quaternary structure, monomer. Binds 30S ribosomal subunits, but not 50S ribosomal subunits or 70S ribosomes.

It is found in the cytoplasm. Its function is as follows. One of several proteins that assist in the late maturation steps of the functional core of the 30S ribosomal subunit. Associates with free 30S ribosomal subunits (but not with 30S subunits that are part of 70S ribosomes or polysomes). Required for efficient processing of 16S rRNA. May interact with the 5'-terminal helix region of 16S rRNA. The polypeptide is Ribosome-binding factor A (Shewanella halifaxensis (strain HAW-EB4)).